Consider the following 91-residue polypeptide: MARSLKKGPFADEHLLKKVEKAIESKSRKPIKTWSRRSTIFPDFVNLTFQVHNGKNFIDVFVTDDMVGHKLGEFAPTRTFGGHGEDKRKKK.

The protein belongs to the universal ribosomal protein uS19 family.

Functionally, protein S19 forms a complex with S13 that binds strongly to the 16S ribosomal RNA. The polypeptide is Small ribosomal subunit protein uS19 (rpsS) (Mycoplasmopsis pulmonis (strain UAB CTIP) (Mycoplasma pulmonis)).